Reading from the N-terminus, the 238-residue chain is Opacity protein opA66 (238 aa).

Ala-1 is a signal peptide. 2 disordered regions span residues 88–109 (NLQR…QENG) and 162–183 (GARG…AHQE). The span at 168–183 (PTVSSPYKNTQDAHQE) shows a compositional bias: polar residues.

It belongs to the opacity porin family.

Its subcellular location is the cell outer membrane. Implicated in a number of adherence functions. OPA proteins are implicated in pathogenesis and are subject to phase variation. This Neisseria gonorrhoeae protein is Opacity protein opA66.